The sequence spans 162 residues: RNA pyrophosphohydrolase (162 aa).

In terms of domain architecture, Nudix hydrolase spans 7 to 149; the sequence is KYRPCVGIML…KKEVYKTVIE (143 aa). A Nudix box motif is present at residues 40–61; that stretch reads GGVDDGEELEQAALRELLEEVG.

This sequence belongs to the Nudix hydrolase family. RppH subfamily. A divalent metal cation is required as a cofactor.

Accelerates the degradation of transcripts by removing pyrophosphate from the 5'-end of triphosphorylated RNA, leading to a more labile monophosphorylated state that can stimulate subsequent ribonuclease cleavage. The chain is RNA pyrophosphohydrolase from Wolbachia pipientis wMel.